Consider the following 114-residue polypeptide: Protachykinin (114 aa).

The N-terminal stretch at 1–19 (MKFLLPSIVIFLVLCQVFG) is a signal peptide. The propeptide occupies 20-55 (EELGPKEDLDYWTGSNQVQDEWLQADPFREIIRRMT). M67 and M91 each carry methionine amide.

It belongs to the tachykinin family. In terms of tissue distribution, expressed in all parts of the brain, with robust expression in the olfactory bulbs and tracts, moderate expression in the hypothalamus and posterior brain, and weak expression in the telencephalon-preoptic region and optic tectum-thalamus. Also expressed in nerve fibers, intestine, testes and pituitary gland. Not expressed in the liver or kidneys.

The protein localises to the secreted. Tachykinins are active peptides which excite neurons, evoke behavioral responses, are potent vasodilators and secretagogues, and contract (directly or indirectly) many smooth muscles. Functionally, substance P produces a voltage-dependent inhibition of calcium current in retinal bipolar cells. It can enhance learning and memory, may regulate social approach and feeding behaviors, and can accelerate the functional recovery in postural balance in response to light after unilateral labyrinthectomy. This is Protachykinin from Carassius auratus (Goldfish).